A 417-amino-acid polypeptide reads, in one-letter code: NADH-quinone oxidoreductase subunit D (417 aa).

It belongs to the complex I 49 kDa subunit family. NDH-1 is composed of 14 different subunits. Subunits NuoB, C, D, E, F, and G constitute the peripheral sector of the complex.

It localises to the cell inner membrane. It carries out the reaction a quinone + NADH + 5 H(+)(in) = a quinol + NAD(+) + 4 H(+)(out). NDH-1 shuttles electrons from NADH, via FMN and iron-sulfur (Fe-S) centers, to quinones in the respiratory chain. The immediate electron acceptor for the enzyme in this species is believed to be ubiquinone. Couples the redox reaction to proton translocation (for every two electrons transferred, four hydrogen ions are translocated across the cytoplasmic membrane), and thus conserves the redox energy in a proton gradient. This chain is NADH-quinone oxidoreductase subunit D, found in Chromobacterium violaceum (strain ATCC 12472 / DSM 30191 / JCM 1249 / CCUG 213 / NBRC 12614 / NCIMB 9131 / NCTC 9757 / MK).